The chain runs to 419 residues: Fumarylacetoacetase (419 aa).

S2 carries the post-translational modification N-acetylserine. S92 is subject to Phosphoserine. D126 serves as a coordination point for Ca(2+). Substrate is bound at residue Y128. Residue H133 is the Proton acceptor of the active site. R142 serves as a coordination point for substrate. Residues E199, E201, and D233 each contribute to the Ca(2+) site. D233 is a binding site for Mg(2+). Substrate is bound by residues Q240 and Y244. K253 and T257 together coordinate Mg(2+). Position 309 is a phosphoserine (S309). T350 contributes to the substrate binding site. Y395 is subject to Phosphotyrosine.

It belongs to the FAH family. In terms of assembly, homodimer. Ca(2+) serves as cofactor. Requires Mg(2+) as cofactor. As to expression, mainly expressed in liver and kidney. Lower levels are also detected in many other tissues.

The enzyme catalyses 4-fumarylacetoacetate + H2O = acetoacetate + fumarate + H(+). It participates in amino-acid degradation; L-phenylalanine degradation; acetoacetate and fumarate from L-phenylalanine: step 6/6. The chain is Fumarylacetoacetase (FAH) from Homo sapiens (Human).